We begin with the raw amino-acid sequence, 289 residues long: SAGA-associated factor 29kDa (289 aa).

Positions 9-36 (AQQIQDRLKDIQQNIHNVDEERRRAENS) form a coiled coil. The SGF29 C-terminal domain occupies 137-278 (GNYVAKVGDN…VIAYRPTKKG (142 aa)). Histone H3K4me3 N-terminus binding regions lie at residues 179–181 (DID) and 225–228 (QTTC). Residues 249 to 251 (FED) are histone H3K4me3 binding.

Belongs to the SGF29 family. In terms of assembly, component of the Spt-Ada-Gcn5 acetyltransferase (SAGA) complex consisting of wda/Taf5L, Saf6, Taf9, Taf10b, Taf12, Ada1, Spt3, Spt7, Spt20, Sf3b3, Sf3b5, Nipped-A/Tra1, a histone acetyltransferase (HAT) module made up of Gcn5, Ada2b (Isoform B), Ada3 and Sgf29, and a deubiquitinase (DUB) module made up of not/nonstop, Sgf11, Atxn7 and e(y)2. Component of the Chiffon histone acetyltransferase (CHAT) complex consisting of Ada3, Sgf29, Gcn5, chif/chiffon and Ada2b (Isoform A).

Its subcellular location is the nucleus. Functionally, component of both the SAGA and CHAT histone acetyltransferase complexes, which both predominantly acetylate histone H3. This chain is SAGA-associated factor 29kDa, found in Drosophila melanogaster (Fruit fly).